Consider the following 131-residue polypeptide: Ribonuclease P protein component (131 aa).

The protein belongs to the RnpA family. As to quaternary structure, consists of a catalytic RNA component (M1 or rnpB) and a protein subunit.

It carries out the reaction Endonucleolytic cleavage of RNA, removing 5'-extranucleotides from tRNA precursor.. RNaseP catalyzes the removal of the 5'-leader sequence from pre-tRNA to produce the mature 5'-terminus. It can also cleave other RNA substrates such as 4.5S RNA. The protein component plays an auxiliary but essential role in vivo by binding to the 5'-leader sequence and broadening the substrate specificity of the ribozyme. The protein is Ribonuclease P protein component of Synechococcus sp. (strain WH7803).